We begin with the raw amino-acid sequence, 265 residues long: Lipopolysaccharide core heptose(I) kinase WaaP (265 aa).

The active site involves D162.

The protein belongs to the protein kinase superfamily. KdkA/RfaP family. Mg(2+) serves as cofactor.

It carries out the reaction an L-alpha-D-Hep-(1-&gt;3)-L-alpha-D-Hep-(1-&gt;5)-[alpha-Kdo-(2-&gt;4)]-alpha-Kdo-(2-&gt;6)-lipid A + ATP = an L-alpha-D-Hep-(1-&gt;3)-4-O-phospho-L-alpha-D-Hep-(1-&gt;5)-[alpha-Kdo-(2-&gt;4)]-alpha-Kdo-(2-&gt;6)-lipid A + ADP + H(+). The enzyme catalyses L-alpha-D-Hep-(1-&gt;3)-L-alpha-D-Hep-(1-&gt;5)-[alpha-Kdo-(2-&gt;4)]-alpha-Kdo-(2-&gt;6)-lipid A (E. coli) + ATP = L-alpha-D-Hep-(1-&gt;3)-4-O-phospho-L-alpha-D-Hep-(1-&gt;5)-[alpha-Kdo-(2-&gt;4)]-alpha-Kdo-(2-&gt;6)-lipid A (E. coli) + ADP + H(+). It functions in the pathway bacterial outer membrane biogenesis; LPS core biosynthesis. In terms of biological role, kinase involved in the biosynthesis of the core oligosaccharide region of lipopolysaccharide (LPS). Catalyzes the phosphorylation of heptose I (HepI), the first heptose added to the Kdo2-lipid A module. The chain is Lipopolysaccharide core heptose(I) kinase WaaP from Escherichia coli (strain K12).